A 467-amino-acid chain; its full sequence is MSSRTVIRGGLVITASDEIHADVLIEDGRVAALAATGTPAAEAFTAENVIDASGKYVIPGGVDGHTHMEMPFGGTYAADTFETGTRAAAWGGTTTIVDFAIQSVGHSLREGLDAWHAKAEGNCAIDYGFHMIVSDVNQETLKEMDLLVEEGVTSFKQFMAYPGVFYSDDGQILRAMQRAAENGGLIMMHAENGIAIDVLVEQALARGETDPRFHGEVRKALLEAEATHRAIRLAQVAGAPLYVVHVSATEAVAELTRARDEGLPVFGETCPQYLFLSTDNLAEPDFEGAKYVCSTPLRPKEHQAALWRGLRTNDLQVVSTDHCPFCFSGQKELGRGDFSRIPNGMPGVENRMDLLHQAVVEGHIGRRRWIEIACATPARMFGLYPKKGTIAPGADADIVVYDPHAEQVISAETHHMNVDYSAYEGRRITGRVETVLSRGEPVVTEREYTGRKGHGAYTPRATCQYLT.

3 residues coordinate Zn(2+): His65, His67, and Lys156. Position 156 is an N6-carboxylysine (Lys156). Tyr161 provides a ligand contact to substrate. Residues His189 and His245 each coordinate Zn(2+). Ser294 is a substrate binding site. Residue Asp321 participates in Zn(2+) binding. Asn343 is a substrate binding site.

Belongs to the metallo-dependent hydrolases superfamily. Hydantoinase/dihydropyrimidinase family. Homotetramer. Requires Zn(2+) as cofactor. Carboxylation allows a single lysine to coordinate two zinc ions.

Catalyzes the stereospecific hydrolysis of the cyclic amide bond of D-hydantoin derivatives. The polypeptide is D-hydantoinase (hyuA) (Streptomyces coelicolor (strain ATCC BAA-471 / A3(2) / M145)).